Here is a 186-residue protein sequence, read N- to C-terminus: ATP synthase subunit delta (186 aa).

Belongs to the ATPase delta chain family. As to quaternary structure, F-type ATPases have 2 components, F(1) - the catalytic core - and F(0) - the membrane proton channel. F(1) has five subunits: alpha(3), beta(3), gamma(1), delta(1), epsilon(1). F(0) has three main subunits: a(1), b(2) and c(10-14). The alpha and beta chains form an alternating ring which encloses part of the gamma chain. F(1) is attached to F(0) by a central stalk formed by the gamma and epsilon chains, while a peripheral stalk is formed by the delta and b chains.

Its subcellular location is the cell membrane. In terms of biological role, f(1)F(0) ATP synthase produces ATP from ADP in the presence of a proton or sodium gradient. F-type ATPases consist of two structural domains, F(1) containing the extramembraneous catalytic core and F(0) containing the membrane proton channel, linked together by a central stalk and a peripheral stalk. During catalysis, ATP synthesis in the catalytic domain of F(1) is coupled via a rotary mechanism of the central stalk subunits to proton translocation. Its function is as follows. This protein is part of the stalk that links CF(0) to CF(1). It either transmits conformational changes from CF(0) to CF(1) or is implicated in proton conduction. The sequence is that of ATP synthase subunit delta from Wolbachia pipientis wMel.